Here is a 673-residue protein sequence, read N- to C-terminus: G-protein-signaling modulator 1 (673 aa).

A mediates association with membranes region spans residues methionine 1 to arginine 507. TPR repeat units follow at residues cysteine 28–aspartate 61, serine 66–isoleucine 99, alanine 106–glutamine 139, alanine 146–valine 178, glutamate 180–leucine 199, glycine 206–phenylalanine 239, arginine 246–isoleucine 279, alanine 286–leucine 319, and glycine 326–isoleucine 359. Positions aspartate 361–isoleucine 485 are interaction with STK11/LKB1. Phosphoserine is present on serine 410. Arginine 418 is subject to Omega-N-methylarginine. The span at proline 420–serine 439 shows a compositional bias: basic and acidic residues. The disordered stretch occupies residues proline 420 to arginine 477. A phosphoserine mark is found at serine 442, serine 467, serine 469, serine 490, and serine 491. The span at lysine 451–serine 467 shows a compositional bias: basic and acidic residues. Residues glutamate 493–leucine 515 enclose the GoLoco 1 domain. The tract at residues aspartate 510–proline 544 is disordered. Positions glutamate 516–threonine 530 are enriched in low complexity. Serine 543 and serine 567 each carry phosphoserine. GoLoco domains lie at threonine 546–valine 568, glycine 594–proline 616, and aspartate 628–leucine 650. Disordered regions lie at residues isoleucine 609–aspartate 628 and glutamate 645–serine 673. Serine 653 carries the post-translational modification Phosphoserine.

This sequence belongs to the GPSM family. Interacts with INSC/inscuteable and FRMPD1. Interacts with GNAI1, GNAI2 and GNAI3 preferentially in their GDP-bound state. May also interact with GNAO1. Interacts with STK11/LKB1 and MACF1. Post-translationally, phosphorylation regulates interaction with G(i/o) alpha. Isoform 4 is specifically expressed in brain by neurons and also detected in testis, liver, kidney, heart and pancreas (at protein level). Highly expressed in cerebellum and subventricular zone-olfactory bulb system. Isoform 2 and isoform 3 are specifically expressed in heart and are also detected in brain.

The protein resides in the endoplasmic reticulum membrane. It localises to the golgi apparatus membrane. Its subcellular location is the cell membrane. The protein localises to the cytoplasm. It is found in the cytosol. Functionally, guanine nucleotide dissociation inhibitor (GDI) which functions as a receptor-independent activator of heterotrimeric G-protein signaling. Keeps G(i/o) alpha subunit in its GDP-bound form thus uncoupling heterotrimeric G-proteins signaling from G protein-coupled receptors. Controls spindle orientation and asymmetric cell fate of cerebral cortical progenitors. May also be involved in macroautophagy in intestinal cells. May play a role in drug addiction. In Rattus norvegicus (Rat), this protein is G-protein-signaling modulator 1 (Gpsm1).